The chain runs to 185 residues: Translation initiation factor IF-3 (185 aa).

It belongs to the IF-3 family. As to quaternary structure, monomer.

Its subcellular location is the cytoplasm. IF-3 binds to the 30S ribosomal subunit and shifts the equilibrium between 70S ribosomes and their 50S and 30S subunits in favor of the free subunits, thus enhancing the availability of 30S subunits on which protein synthesis initiation begins. This chain is Translation initiation factor IF-3, found in Rickettsia prowazekii (strain Madrid E).